The primary structure comprises 479 residues: MLLPILLHFLLLITQLNGSPAEVRLINDLMSGYVREERPTLDSSKPVVVSLGVFLQQIINLSEKEEQLEVNAWLKFQWRDENLRWEPTAYENVTDLRHPPDALWTPDILLYNSVDSEFDSSYKVNLVNYHTGNINWMPPGIFKVSCKLDIYWFPFDEQVCYFKFGSWTYTRDKIQLEKGDFDFSEFIPNGEWIIIDYRTNITVKQYECCPEQYEDITFTLHLRRRTLYYSFNLIAPVLLTMILVILGFTVSPETCEKVGLQISVSLAICIFLTIMSELTPQTSEAVPLLGVFFHTCNFISVLATSFTVYVQSFHFRNQHVHERMDFWMRFILLEWSPWLLRMKMPDRENNFQTLTESWKGRNRRESMARTAFEYADGPVTQIHSMGIMLKDNFEELIYQVKQEKIADEKGIERLRVLQKIYDHVKMIREHDDDNDEDSRVALEWRFAAIVVDRLCLLAFSLLIVVVSIIIALRAPYLFA.

Positions Met1–Gly18 are cleaved as a signal peptide. Topologically, residues Ser19–Ser230 are extracellular. N-linked (GlcNAc...) asparagine glycosylation is found at Asn60 and Asn92. A disulfide bridge connects residues Cys146 and Cys160. A glycan (N-linked (GlcNAc...) asparagine) is linked at Asn200. An intrachain disulfide couples Cys208 to Cys209. The helical transmembrane segment at Phe231–Ser251 threads the bilayer. Residues Pro252 to Lys257 are Cytoplasmic-facing. The chain crosses the membrane as a helical span at residues Val258 to Leu278. Topologically, residues Thr279–Ala285 are extracellular. Residues Val286–Phe306 traverse the membrane as a helical segment. The Cytoplasmic portion of the chain corresponds to Thr307–Arg453. The helical transmembrane segment at Leu454–Ala474 threads the bilayer. Topologically, residues Pro475–Ala479 are extracellular.

It belongs to the ligand-gated ion channel (TC 1.A.9) family. Acetylcholine receptor (TC 1.A.9.1) subfamily. In terms of tissue distribution, expressed in interneurons, motor neurons, pharyngeal neurons and muscles.

It localises to the cell membrane. The protein localises to the postsynaptic cell membrane. In terms of biological role, after binding acetylcholine, the AChR responds by an extensive change in conformation that affects all subunits and leads to opening of an ion-conducting channel across the plasma membrane. Activity is required in glutamatergic neurons to mediate nicotine-induced and nicotine-motivated behaviors. The polypeptide is Acetylcholine receptor subunit alpha-type acr-15 (Caenorhabditis elegans).